The chain runs to 188 residues: 3-hydroxyanthranilate 3,4-dioxygenase 2 (188 aa).

Arg-46 contributes to the O2 binding site. Residues His-50, Glu-70, and His-108 each contribute to the Fe cation site. Residue Glu-70 coordinates substrate. Positions 112 and 122 each coordinate substrate.

This sequence belongs to the 3-HAO family. Fe(2+) serves as cofactor.

Its subcellular location is the cytoplasm. It catalyses the reaction 3-hydroxyanthranilate + O2 = (2Z,4Z)-2-amino-3-carboxymuconate 6-semialdehyde. Its pathway is cofactor biosynthesis; NAD(+) biosynthesis; quinolinate from L-kynurenine: step 3/3. Functionally, catalyzes the oxidative ring opening of 3-hydroxyanthranilate to 2-amino-3-carboxymuconate semialdehyde, which spontaneously cyclizes to quinolinate. This chain is 3-hydroxyanthranilate 3,4-dioxygenase 2 (bna1-2), found in Aspergillus fumigatus (strain CBS 144.89 / FGSC A1163 / CEA10) (Neosartorya fumigata).